A 469-amino-acid chain; its full sequence is MEARVEQFIENNRLFGMETNVLVAVSGGPDSMALLAIMANLREKWKLNLFGVHVNHRLRGEESNKDAELVQSFSARLGVPCNVKDVDVAAFKAEHHVGTQQAARALRYQVFQGEMERVHATVLLTAHHGDDEVETAFMKLTRGTTPLTKLGIAATRPFANGVLARPLLEETKRSIVAYCHEKAIPYRIDQSNFSDAYTRNRFRMNMAPYLVEENPHIHKHIGRFDRWQEEDNHYLMEQAKAHLDQILTKKSEKSIELEIQALCLAPFPLQRRMIHLILNYLHLNVYGVNDMRVFPDAIEQIQAFLQTSAPSAQLDLPGRVQVKRSYGTCLFTTAPFIETKAYCHLLSIPGKVDTPLGVIRADTREELLELEHTDAVSFQVSQVAFPLYIRNRKPGDKLSPSGMSGSKKVNRLFIDRKVDRAKRDAWPLLVDANDSILWVPSLQTSRILTRSANVQGELLHVTFSQHKWP.

An ATP-binding site is contributed by 26–31; the sequence is SGGPDS.

The protein belongs to the tRNA(Ile)-lysidine synthase family.

Its subcellular location is the cytoplasm. The catalysed reaction is cytidine(34) in tRNA(Ile2) + L-lysine + ATP = lysidine(34) in tRNA(Ile2) + AMP + diphosphate + H(+). Ligates lysine onto the cytidine present at position 34 of the AUA codon-specific tRNA(Ile) that contains the anticodon CAU, in an ATP-dependent manner. Cytidine is converted to lysidine, thus changing the amino acid specificity of the tRNA from methionine to isoleucine. This is tRNA(Ile)-lysidine synthase from Shouchella clausii (strain KSM-K16) (Alkalihalobacillus clausii).